The primary structure comprises 161 residues: Ubiquitin-conjugating enzyme 15 (161 aa).

Residues 15-161 form the UBC core domain; the sequence is IACNRLQKEL…TRWWFHDDKV (147 aa). Residue Cys99 is the Glycyl thioester intermediate of the active site.

Belongs to the ubiquitin-conjugating enzyme family.

It catalyses the reaction S-ubiquitinyl-[E1 ubiquitin-activating enzyme]-L-cysteine + [E2 ubiquitin-conjugating enzyme]-L-cysteine = [E1 ubiquitin-activating enzyme]-L-cysteine + S-ubiquitinyl-[E2 ubiquitin-conjugating enzyme]-L-cysteine.. It participates in protein modification; protein ubiquitination. In terms of biological role, accepts the ubiquitin from the E1 complex and catalyzes its covalent attachment to other proteins. The protein is Ubiquitin-conjugating enzyme 15 (UBC15) of Arabidopsis thaliana (Mouse-ear cress).